Here is a 72-residue protein sequence, read N- to C-terminus: IDMVVECNKDGYLMEHDGCKLSCLMKKGTFCAEECQRMKGKDGYCYAWLACYCYNMPDWVKTWSRATNRCGK.

A signal peptide spans 1–7 (IDMVVEC). In terms of domain architecture, LCN-type CS-alpha/beta spans 9–71 (KDGYLMEHDG…TWSRATNRCG (63 aa)). 4 disulfide bridges follow: Cys19-Cys70, Cys23-Cys45, Cys31-Cys51, and Cys35-Cys53.

As to expression, expressed by the venom gland.

The protein resides in the secreted. Its function is as follows. Beta toxins bind voltage-independently at site-4 of sodium channels (Nav) and shift the voltage of activation toward more negative potentials thereby affecting sodium channel activation and promoting spontaneous and repetitive firing. This is Putative beta-neurotoxin from Tityus pachyurus (Colombian scorpion).